The primary structure comprises 197 residues: Peptide deformylase (197 aa).

Positions 106 and 148 each coordinate Fe cation. Glu149 is an active-site residue. His152 lines the Fe cation pocket.

This sequence belongs to the polypeptide deformylase family. The cofactor is Fe(2+).

It carries out the reaction N-terminal N-formyl-L-methionyl-[peptide] + H2O = N-terminal L-methionyl-[peptide] + formate. In terms of biological role, removes the formyl group from the N-terminal Met of newly synthesized proteins. Requires at least a dipeptide for an efficient rate of reaction. N-terminal L-methionine is a prerequisite for activity but the enzyme has broad specificity at other positions. The sequence is that of Peptide deformylase from Mycolicibacterium gilvum (strain PYR-GCK) (Mycobacterium gilvum (strain PYR-GCK)).